The chain runs to 276 residues: 3-methyl-2-oxobutanoate hydroxymethyltransferase (276 aa).

2 residues coordinate Mg(2+): D50 and D89. Residues 50–51 (DS), D89, and K119 each bind 3-methyl-2-oxobutanoate. E121 is a Mg(2+) binding site. Residue E188 is the Proton acceptor of the active site.

It belongs to the PanB family. In terms of assembly, homodecamer; pentamer of dimers. It depends on Mg(2+) as a cofactor.

It is found in the cytoplasm. The catalysed reaction is 3-methyl-2-oxobutanoate + (6R)-5,10-methylene-5,6,7,8-tetrahydrofolate + H2O = 2-dehydropantoate + (6S)-5,6,7,8-tetrahydrofolate. The protein operates within cofactor biosynthesis; (R)-pantothenate biosynthesis; (R)-pantoate from 3-methyl-2-oxobutanoate: step 1/2. Its function is as follows. Catalyzes the reversible reaction in which hydroxymethyl group from 5,10-methylenetetrahydrofolate is transferred onto alpha-ketoisovalerate to form ketopantoate. This is 3-methyl-2-oxobutanoate hydroxymethyltransferase from Paracoccus denitrificans (strain Pd 1222).